A 583-amino-acid polypeptide reads, in one-letter code: 5-aminolevulinate synthase, erythroid-specific, mitochondrial (583 aa).

A succinyl-CoA-binding site is contributed by Arg-158. Pyridoxal 5'-phosphate contacts are provided by Cys-253 and Phe-254. Residues Ser-275 and Arg-294 each coordinate succinyl-CoA. Pyridoxal 5'-phosphate-binding residues include Ser-327, His-355, and Thr-383. Lys-386 is an active-site residue. Lys-386 is subject to N6-(pyridoxal phosphate)lysine. Pyridoxal 5'-phosphate-binding residues include Thr-415 and Thr-416. Thr-503 is a succinyl-CoA binding site.

It belongs to the class-II pyridoxal-phosphate-dependent aminotransferase family. As to quaternary structure, homodimer. The cofactor is pyridoxal 5'-phosphate.

It localises to the mitochondrion inner membrane. The enzyme catalyses succinyl-CoA + glycine + H(+) = 5-aminolevulinate + CO2 + CoA. It participates in porphyrin-containing compound metabolism; protoporphyrin-IX biosynthesis; 5-aminolevulinate from glycine: step 1/1. Its function is as follows. Catalyzes the pyridoxal 5'-phosphate (PLP)-dependent condensation of succinyl-CoA and glycine to form aminolevulinic acid (ALA), with CoA and CO2 as by-products. Contributes significantly to heme formation during erythropoiesis. This Danio rerio (Zebrafish) protein is 5-aminolevulinate synthase, erythroid-specific, mitochondrial (alas2).